Reading from the N-terminus, the 188-residue chain is Small ribosomal subunit protein uS7 (188 aa).

Belongs to the universal ribosomal protein uS7 family. In terms of assembly, part of the 30S ribosomal subunit.

Its function is as follows. One of the primary rRNA binding proteins, it binds directly to 16S rRNA where it nucleates assembly of the head domain of the 30S subunit. Is located at the subunit interface close to the decoding center. The protein is Small ribosomal subunit protein uS7 of Methanococcus maripaludis (strain C6 / ATCC BAA-1332).